Here is a 212-residue protein sequence, read N- to C-terminus: Adenylate kinase (212 aa).

10-15 (GAGKGT) lines the ATP pocket. The NMP stretch occupies residues 30–59 (AIGDIFRTIIKTSTSEAELINNYVKQGELI). AMP contacts are provided by residues R36, 57–59 (ELI), 85–88 (GYPR), and Q92. The LID stretch occupies residues 122–160 (GRYSCKNCGKIYNRYFLQPKTDNVCDVCGSSTFDYRKDD). R123 lines the ATP pocket. Zn(2+) contacts are provided by C126 and C129. 132–133 (IY) is an ATP binding site. C146 and C149 together coordinate Zn(2+). Residues R157 and R168 each contribute to the AMP site. An ATP-binding site is contributed by K196.

This sequence belongs to the adenylate kinase family. As to quaternary structure, monomer.

It localises to the cytoplasm. It catalyses the reaction AMP + ATP = 2 ADP. The protein operates within purine metabolism; AMP biosynthesis via salvage pathway; AMP from ADP: step 1/1. Its function is as follows. Catalyzes the reversible transfer of the terminal phosphate group between ATP and AMP. Plays an important role in cellular energy homeostasis and in adenine nucleotide metabolism. The chain is Adenylate kinase from Rickettsia africae (strain ESF-5).